Here is a 325-residue protein sequence, read N- to C-terminus: Olfactory receptor 5H6 (325 aa).

Residues 1-41 are Extracellular-facing; it reads MFLYLCFIFQRTCSEEMEEENATLLTEFVLTGFLHQPDCKI. Residue Asn21 is glycosylated (N-linked (GlcNAc...) asparagine). A helical membrane pass occupies residues 42–62; the sequence is PLFLAFLVIYLITIMGNLGLI. At 63–70 the chain is on the cytoplasmic side; that stretch reads VLIWKDPH. Residues 71 to 91 form a helical membrane-spanning segment; that stretch reads LHIPMYLFLGSLAFVDASLSS. The Extracellular portion of the chain corresponds to 92-115; sequence TVTPKMLINFLAKSKMISLSECMV. Cysteines 113 and 205 form a disulfide. A helical membrane pass occupies residues 116–136; sequence QFFSLVTTVTTECFLLATMAY. Residues 137–155 lie on the Cytoplasmic side of the membrane; that stretch reads DRYVAICKALLYPVIMTNE. Residues 156-176 form a helical membrane-spanning segment; the sequence is LCIQLLVLSFIGGLLHALIHE. Over 177–212 the chain is Extracellular; the sequence is AFSFRLTFCNSNIIQHFYCDIIPLLKISCTDSSINF. Residues 213–233 traverse the membrane as a helical segment; it reads LMVFIFAGSVQVFTIGTILIS. Over 234–253 the chain is Cytoplasmic; the sequence is YTIILFTILEKKSIKGIRKA. The chain crosses the membrane as a helical span at residues 254-274; that stretch reads VSTCGAHLLSVSLYYGPLTFK. The Extracellular segment spans residues 275 to 287; that stretch reads YLGSASPQADDQD. Residues 288-308 form a helical membrane-spanning segment; it reads MMESLFYTVIVPLLNPMIYSL. The Cytoplasmic segment spans residues 309–325; sequence RNKQVIASFTKMFKSNV.

Belongs to the G-protein coupled receptor 1 family.

It is found in the cell membrane. In terms of biological role, odorant receptor. The protein is Olfactory receptor 5H6 (OR5H6) of Homo sapiens (Human).